The following is a 510-amino-acid chain: Bifunctional pantoate ligase/cytidylate kinase (510 aa).

Residues methionine 1–valine 276 form a pantoate--beta-alanine ligase region. Methionine 29 to histidine 36 lines the ATP pocket. Catalysis depends on histidine 36, which acts as the Proton donor. Glutamine 61 serves as a coordination point for (R)-pantoate. Glutamine 61 contributes to the beta-alanine binding site. Position 150–153 (glycine 150–aspartate 153) interacts with ATP. Glutamine 156 lines the (R)-pantoate pocket. Residue leucine 187–arginine 190 participates in ATP binding. Residues phenylalanine 277 to lysine 510 are cytidylate kinase.

This sequence in the N-terminal section; belongs to the pantothenate synthetase family. It in the C-terminal section; belongs to the cytidylate kinase family. Type 1 subfamily.

Its subcellular location is the cytoplasm. The catalysed reaction is (R)-pantoate + beta-alanine + ATP = (R)-pantothenate + AMP + diphosphate + H(+). It catalyses the reaction CMP + ATP = CDP + ADP. It carries out the reaction dCMP + ATP = dCDP + ADP. It participates in cofactor biosynthesis; (R)-pantothenate biosynthesis; (R)-pantothenate from (R)-pantoate and beta-alanine: step 1/1. Catalyzes the condensation of pantoate with beta-alanine in an ATP-dependent reaction via a pantoyl-adenylate intermediate. Functionally, catalyzes the transfer of a phosphate group from ATP to either CMP or dCMP to form CDP or dCDP and ADP, respectively. This Prochlorococcus marinus (strain MIT 9301) protein is Bifunctional pantoate ligase/cytidylate kinase.